A 325-amino-acid polypeptide reads, in one-letter code: Aldo-keto reductase family 1 member A1 (325 aa).

The residue at position 2 (Ala-2) is an N-acetylalanine. Ser-4 bears the Phosphoserine mark. NADP(+) is bound by residues 11–20 (GQKMPLIGLG), Thr-21, and Trp-22. Position 38 is a phosphoserine (Ser-38). Asp-45 is an NADP(+) binding site. The active-site Proton donor is Tyr-50. Residue Lys-127 is modified to N6-acetyllysine; alternate. Lys-127 is subject to N6-succinyllysine; alternate. Lys-145 carries the N6-succinyllysine modification. Ser-162, Asn-163, Ser-211, Leu-213, Ser-215, Ser-216, Lys-263, Ser-264, Ile-265, Thr-266, Arg-269, Gln-272, and Asn-273 together coordinate NADP(+). Ser-211 bears the Phosphoserine mark.

It belongs to the aldo/keto reductase family. As to quaternary structure, monomer. Widely expressed. Highly expressed in kidney, salivary gland and liver. Detected in trachea, stomach, brain, lung, prostate, placenta, mammary gland, small intestine and lung.

The protein resides in the cytoplasm. Its subcellular location is the cytosol. The protein localises to the apical cell membrane. It carries out the reaction a primary alcohol + NADP(+) = an aldehyde + NADPH + H(+). The enzyme catalyses allyl alcohol + NADP(+) = acrolein + NADPH + H(+). The catalysed reaction is glycerol + NADP(+) = D-glyceraldehyde + NADPH + H(+). It catalyses the reaction glycerol + NADP(+) = L-glyceraldehyde + NADPH + H(+). It carries out the reaction hydroxyacetone + NADP(+) = methylglyoxal + NADPH + H(+). The enzyme catalyses a 4-hydroxynonen-1-ol + NADP(+) = a 4-hydroxynonenal + NADPH + H(+). The catalysed reaction is 3-deoxyfructose + NADP(+) = 3-deoxyglucosone + NADPH + H(+). It catalyses the reaction L-gulonate + NADP(+) = aldehydo-D-glucuronate + NADPH + H(+). It carries out the reaction L-gulono-1,4-lactone + NADP(+) = D-glucurono-3,6-lactone + NADPH + H(+). The enzyme catalyses pyridine 3-methanol + NADP(+) = pyridine-3-carbaldehyde + NADPH + H(+). The catalysed reaction is S-nitroso-CoA + NADPH + H(+) = sulfinamide-CoA + NADP(+). It catalyses the reaction S-nitrosoglutathione + NADPH + H(+) = S-(hydroxysulfenamide)glutathione + NADP(+). Its function is as follows. Catalyzes the NADPH-dependent reduction of a wide variety of carbonyl-containing compounds to their corresponding alcohols. Displays enzymatic activity towards endogenous metabolites such as aromatic and aliphatic aldehydes, ketones, monosaccharides and bile acids, with a preference for negatively charged substrates, such as glucuronate and succinic semialdehyde. Functions as a detoxifiying enzyme by reducing a range of toxic aldehydes. Reduces methylglyoxal and 3-deoxyglucosone, which are present at elevated levels under hyperglycemic conditions and are cytotoxic. Involved also in the detoxification of lipid-derived aldehydes like acrolein. Plays a role in the activation of procarcinogens, such as polycyclic aromatic hydrocarbon trans-dihydrodiols, and in the metabolism of various xenobiotics and drugs, including the anthracyclines doxorubicin (DOX) and daunorubicin (DAUN). Also acts as an inhibitor of protein S-nitrosylation by mediating degradation of S-nitroso-coenzyme A (S-nitroso-CoA), a cofactor required to S-nitrosylate proteins. S-nitroso-CoA reductase activity is involved in reprogramming intermediary metabolism in renal proximal tubules, notably by inhibiting protein S-nitrosylation of isoform 2 of PKM (PKM2). Also acts as a S-nitroso-glutathione reductase by catalyzing the NADPH-dependent reduction of S-nitrosoglutathione. Displays no reductase activity towards retinoids. The polypeptide is Aldo-keto reductase family 1 member A1 (AKR1A1) (Homo sapiens (Human)).